Here is a 150-residue protein sequence, read N- to C-terminus: Snake venom vascular endothelial growth factor toxin barietin (150 aa).

Residues 1–24 (MAAYLLAVAILFCIQGWPSGTVQG) form the signal peptide. Position 25 is a pyrrolidone carboxylic acid (Glu) (glutamate 25). 3 disulfides stabilise this stretch: cysteine 38–cysteine 80, cysteine 69–cysteine 115, and cysteine 73–cysteine 117. Residues 119–150 (PRSGSRVNIGKHKRSPEEGEREPSSPLTPGSL) are disordered. Residues 122–150 (GSRVNIGKHKRSPEEGEREPSSPLTPGSL) constitute a propeptide that is removed on maturation.

It belongs to the PDGF/VEGF growth factor family. Snake venom VEGF subfamily. In terms of assembly, homodimer; disulfide-linked. Interacts with high affinity with VEGF receptor-2 (KDR), and with a lower affinity with VEGF receptor-1 (FLT1). Does not bind VEGF receptor-3 (FLT4) and neuropilin-1 (NRP1). Expressed by the venom gland.

The protein resides in the secreted. In terms of biological role, snake venom VEGFs that may contribute to venom dispersion and prey subjugation by inducing vascular permeability and hypotension. This protein induces an increase in capillary permeability after intradermal injection, as well as a drastic hypotensive effect after intravenous injection. The hypotension is mediated by nitric oxide (NO), which is produced by VEGF-activated endothelium NO synthase. Also induces angiogenesis in vitro, probably through VEGF receptor (KDR/VEGFR-2) signaling. The chain is Snake venom vascular endothelial growth factor toxin barietin from Bitis arietans (African puff adder).